Reading from the N-terminus, the 315-residue chain is Diacylglycerol kinase (315 aa).

The 132-residue stretch at Met-1–Tyr-132 folds into the DAGKc domain. ATP-binding positions include Asn-10–Gly-14, Thr-41, Gly-67–Glu-73, and Thr-94. Residues Lys-213, Asp-216, and Tyr-218 each contribute to the Mg(2+) site. Glu-273 (proton acceptor) is an active-site residue.

Belongs to the diacylglycerol/lipid kinase family. Homodimer. It depends on Mg(2+) as a cofactor.

It carries out the reaction a 1,2-diacyl-sn-glycerol + ATP = a 1,2-diacyl-sn-glycero-3-phosphate + ADP + H(+). Its function is as follows. Catalyzes the phosphorylation of diacylglycerol (DAG) into phosphatidic acid. Is a key enzyme involved in the production of lipoteichoic acid by reintroducing DAG formed from the breakdown of membrane phospholipids into the phosphatidylglycerol biosynthetic pathway. This is Diacylglycerol kinase (dagK) from Staphylococcus aureus (strain MRSA252).